Consider the following 483-residue polypeptide: Altronate oxidoreductase (483 aa).

NAD(+) is bound at residue 18 to 29 (IIQFGEGNFLRA).

It belongs to the mannitol dehydrogenase family. UxaB subfamily.

The catalysed reaction is D-altronate + NAD(+) = keto-D-tagaturonate + NADH + H(+). It functions in the pathway carbohydrate metabolism; pentose and glucuronate interconversion. This Shigella flexneri serotype 5b (strain 8401) protein is Altronate oxidoreductase.